The sequence spans 462 residues: Glycoprotein endo-alpha-1,2-mannosidase (462 aa).

Residues 1 to 8 (MAKFRRGT) are Cytoplasmic-facing. The helical; Signal-anchor for type II membrane protein transmembrane segment at 9–29 (CIILALFILFIFSLMMGLKML) threads the bilayer. Topologically, residues 30–462 (RPNTATFGAP…YALDHQLPVS (433 aa)) are lumenal. A catalytic region spans residues 60–462 (DFQKSDRINS…YALDHQLPVS (403 aa)).

It belongs to the glycosyl hydrolase 99 family. Post-translationally, undergoes proteolytic cleavage in the C-terminal region.

The protein resides in the golgi apparatus membrane. The enzyme catalyses N-{alpha-Glc-(1-&gt;3)-alpha-Man-(1-&gt;2)-alpha-Man-(1-&gt;2)-alpha-Man-(1-&gt;3)-[alpha-Man-(1-&gt;2)-alpha-Man-(1-&gt;3)-[alpha-Man-(1-&gt;2)-alpha-Man-(1-&gt;6)]-alpha-Man-(1-&gt;6)]-beta-Man-(1-&gt;4)-beta-GlcNAc-(1-&gt;4)-beta-GlcNAc}-L-asparaginyl-[protein] + H2O = alpha-D-glucosyl-(1-&gt;3)-D-mannopyranose + N(4)-{alpha-D-Man-(1-&gt;2)-alpha-D-Man-(1-&gt;3)-[alpha-D-Man-(1-&gt;2)-alpha-D-Man-(1-&gt;3)-[alpha-D-Man-(1-&gt;2)-alpha-D-Man-(1-&gt;6)]-alpha-D-Man-(1-&gt;6)]-beta-D-Man-(1-&gt;4)-beta-D-GlaNAc-(1-&gt;4)-beta-D-GlcNAc}-L-asparaginyl-[protein] (N-glucan mannose isomer 8A1,2,3B1,2). The sequence is that of Glycoprotein endo-alpha-1,2-mannosidase (MANEA) from Pongo abelii (Sumatran orangutan).